Here is a 654-residue protein sequence, read N- to C-terminus: MPKERIVAPSKEFAKLANVSLKEYKSKYKESIEKPEKFWAEQAKRLTWFKKWTKVLRHDFAKAKVEWFVGGKLNVSYNCLDRHLDSPLKNKAALIWEGDNPDESKVLTYHDLHREVNHFANVLKKFKVKKGDRVLIYLPMVPELAIATLACTRIGAVHSVVFGGFSPEALLGRIEDCKPTLVITADGGYRGGKPIELKKNVDAALAETKFKVNDVIVVKRTGDEGNLNWKEGRDHWYHYLMKDPEVKKECPAVPMESEDPLFILYTSGSTGKPKGVLHTTAGYLLGANLTFATIFDYKDTDTYWCTADIGWITGHSYILYGPLSNGATSLMFEGVPSYPDMGRFWDVIDKYKVTVFYTAPTAIRALMREGLEHIKKRSLASLRLLGSVGEPINPEAWEWYYANIGKSKCPIVDTWWQTETGSIMISGIPGAIPQKPGSASWPFYGIQPVLVDNEGVELKGKGEISGNLCIAKPWPSMMRGVYGDPKRFFDTYFSQFKGYYFTGDGANRDKEGYFRITGRVDDVLNVSGHRIGSAEVESALVEHKSVAEAAVVGFPHDIKGQGIYAYVTVKQGVVTNDLLKKELIAMVEKVIGKIARPDVIHWAPGLPKTRSGKIMRRILRKIANNEFDTLGDISTLADPSVVQSLIDDKKKYHS.

CoA contacts are provided by residues 190 to 193 (RGGK) and threonine 313. ATP contacts are provided by residues 389–391 (GEP), 413–418 (DTWWQT), aspartate 504, and arginine 519. Serine 527 is a binding site for CoA. Residue arginine 530 participates in ATP binding. 3 residues coordinate Mg(2+): valine 541, histidine 543, and valine 546. Position 613 is an N6-acetyllysine (lysine 613).

This sequence belongs to the ATP-dependent AMP-binding enzyme family. Mg(2+) serves as cofactor. In terms of processing, acetylated. Deacetylation by the SIR2-homolog deacetylase activates the enzyme.

It catalyses the reaction acetate + ATP + CoA = acetyl-CoA + AMP + diphosphate. Functionally, catalyzes the conversion of acetate into acetyl-CoA (AcCoA), an essential intermediate at the junction of anabolic and catabolic pathways. AcsA undergoes a two-step reaction. In the first half reaction, AcsA combines acetate with ATP to form acetyl-adenylate (AcAMP) intermediate. In the second half reaction, it can then transfer the acetyl group from AcAMP to the sulfhydryl group of CoA, forming the product AcCoA. The protein is Acetyl-coenzyme A synthetase of Leptospira biflexa serovar Patoc (strain Patoc 1 / Ames).